A 246-amino-acid chain; its full sequence is 4-hydroxy-tetrahydrodipicolinate reductase (246 aa).

9–14 (GNTGRM) serves as a coordination point for NAD(+). Arginine 36 serves as a coordination point for NADP(+). NAD(+)-binding positions include 78–80 (GTT) and 104–107 (SPNM). Histidine 137 (proton donor/acceptor) is an active-site residue. Residue histidine 138 coordinates (S)-2,3,4,5-tetrahydrodipicolinate. Lysine 141 serves as the catalytic Proton donor. 147-148 (GT) contributes to the (S)-2,3,4,5-tetrahydrodipicolinate binding site.

Belongs to the DapB family.

It localises to the cytoplasm. The catalysed reaction is (S)-2,3,4,5-tetrahydrodipicolinate + NAD(+) + H2O = (2S,4S)-4-hydroxy-2,3,4,5-tetrahydrodipicolinate + NADH + H(+). It catalyses the reaction (S)-2,3,4,5-tetrahydrodipicolinate + NADP(+) + H2O = (2S,4S)-4-hydroxy-2,3,4,5-tetrahydrodipicolinate + NADPH + H(+). It functions in the pathway amino-acid biosynthesis; L-lysine biosynthesis via DAP pathway; (S)-tetrahydrodipicolinate from L-aspartate: step 4/4. In terms of biological role, catalyzes the conversion of 4-hydroxy-tetrahydrodipicolinate (HTPA) to tetrahydrodipicolinate. This chain is 4-hydroxy-tetrahydrodipicolinate reductase, found in Chlamydia muridarum (strain MoPn / Nigg).